The sequence spans 591 residues: Inactive metallocarboxypeptidase ECM14 (591 aa).

Residues 1 to 21 (MRLFSHLAVLAILACAVPITA) form the signal peptide. A propeptide spanning residues 22 to 175 (IPSFLSNSYP…QTIYESYPSS (154 aa)) is cleaved from the precursor. Residues 203–523 (DYQPFSVIVP…NAVMVLGRFL (321 aa)) form the Peptidase M14 domain. Zn(2+) contacts are provided by histidine 265 and glutamate 268. Substrate-binding positions include 265 to 268 (HARE), arginine 323, and 340 to 341 (DR). Cysteine 334 and cysteine 357 are oxidised to a cystine. N-linked (GlcNAc...) asparagine glycans are attached at residues asparagine 350, asparagine 381, and asparagine 386. Histidine 397 serves as a coordination point for Zn(2+). 398–399 (SY) contacts substrate. The tract at residues 533-591 (DWEDESQRPKADEDDIPSENELDENDDSWIPYDYRNHDDQNEGEGYDNDEWGFRRRRKR) is disordered. Composition is skewed to acidic residues over residues 544–559 (DEDD…ENDD) and 573–582 (NEGEGYDNDE).

The protein belongs to the peptidase M14 family. It depends on Zn(2+) as a cofactor.

It localises to the vacuole. The protein resides in the secreted. Its function is as follows. Inactive carboxypeptidase that may play a role in cell wall organization and biogenesis. This Paracoccidioides brasiliensis (strain Pb18) protein is Inactive metallocarboxypeptidase ECM14 (ECM14).